The chain runs to 204 residues: Large ribosomal subunit protein uL4 (204 aa).

Residues 42 to 55 (GSRQGSKAQKNRSA) are compositionally biased toward polar residues. Residues 42 to 85 (GSRQGSKAQKNRSAVSGGGKRPWAQKGTGRARAGTTRGPIWRSG) form a disordered region. Residues 68 to 79 (GTGRARAGTTRG) show a composition bias toward low complexity.

Belongs to the universal ribosomal protein uL4 family. In terms of assembly, part of the 50S ribosomal subunit.

In terms of biological role, one of the primary rRNA binding proteins, this protein initially binds near the 5'-end of the 23S rRNA. It is important during the early stages of 50S assembly. It makes multiple contacts with different domains of the 23S rRNA in the assembled 50S subunit and ribosome. Its function is as follows. Forms part of the polypeptide exit tunnel. This Vesicomyosocius okutanii subsp. Calyptogena okutanii (strain HA) protein is Large ribosomal subunit protein uL4.